A 239-amino-acid polypeptide reads, in one-letter code: DNA repair protein RecO (239 aa).

The protein belongs to the RecO family.

Involved in DNA repair and RecF pathway recombination. This is DNA repair protein RecO from Bifidobacterium longum (strain DJO10A).